Consider the following 291-residue polypeptide: Kidney mitochondrial carrier protein 1 (291 aa).

S2 carries the N-acetylserine modification. Solcar repeat units lie at residues 7-96, 104-189, and 198-289; these read KPFV…LKRL, ETLL…TKKH, and DTVA…LKKL. Helical transmembrane passes span 9 to 26, 71 to 89, 106 to 124, 164 to 183, 204 to 224, and 264 to 283; these read FVYG…TFPI, GIAP…KIGT, LLVN…SAIA, GVSL…LPVY, FLSS…VDVV, and GFWP…FLTY.

Belongs to the mitochondrial carrier (TC 2.A.29) family. In terms of assembly, interacts with VDAC1. Present in kidney (at protein level). Expressed predominantly within the kidney cortex in the proximal and distal tubules and at lower levels in the testis and white adipose tissue.

Its subcellular location is the mitochondrion inner membrane. The enzyme catalyses sulfite(in) + sulfate(out) = sulfite(out) + sulfate(in). It carries out the reaction thiosulfate(in) + sulfate(out) = thiosulfate(out) + sulfate(in). It catalyses the reaction sulfate(out) + phosphate(in) = sulfate(in) + phosphate(out). The catalysed reaction is oxalate(in) + sulfate(out) = oxalate(out) + sulfate(in). The enzyme catalyses malonate(in) + sulfate(out) = malonate(out) + sulfate(in). It carries out the reaction maleate(in) + sulfate(out) = maleate(out) + sulfate(in). It catalyses the reaction (S)-malate(in) + sulfate(out) = (S)-malate(out) + sulfate(in). The catalysed reaction is (3S)-citramalate(in) + sulfate(out) = (3S)-citramalate(out) + sulfate(in). The enzyme catalyses (3R)-citramalate(in) + sulfate(out) = (3R)-citramalate(out) + sulfate(in). It carries out the reaction sulfate(out) + succinate(in) = sulfate(in) + succinate(out). It catalyses the reaction (S,S)-tartrate(in) + sulfate(out) = (S,S)-tartrate(out) + sulfate(in). The catalysed reaction is (2R,3R)-tartrate(in) + sulfate(out) = (2R,3R)-tartrate(out) + sulfate(in). The enzyme catalyses D-aspartate(in) + sulfate(out) = D-aspartate(out) + sulfate(in). It carries out the reaction L-aspartate(in) + sulfate(out) = L-aspartate(out) + sulfate(in). It catalyses the reaction sulfate(in) = sulfate(out). The catalysed reaction is phosphate(in) = phosphate(out). The enzyme catalyses (S)-malate(out) = (S)-malate(in). In terms of biological role, antiporter that transports inorganic anions (sulfate, sulfite, thiosulfate and phosphate) and, to a lesser extent, a variety of dicarboxylates (e.g. malonate, malate and citramalate) and, even more so, aspartate. The sulfate/sulfate exchange is much higher than the phosphate/phosphate and malate/malate exchanges. The transport affinities is higher for sulfate and thiosulfate than for any other substrate. May catalyze the export of sulfite and thiosulfate (the hydrogen sulfide degradation products) from the mitochondria, thereby modulating the level of the hydrogen sulfide. Also may mediate a very low unidirectional transport of sulfate, phosphate and (S)-malate. This chain is Kidney mitochondrial carrier protein 1, found in Mus musculus (Mouse).